The chain runs to 287 residues: tRNA uridine(34) hydroxylase (287 aa).

A Rhodanese domain is found at 132–226 (EGRPVVMLDT…YFEEVGGAHY (95 aa)). C186 functions as the Cysteine persulfide intermediate in the catalytic mechanism.

Belongs to the TrhO family.

The catalysed reaction is uridine(34) in tRNA + AH2 + O2 = 5-hydroxyuridine(34) in tRNA + A + H2O. Its function is as follows. Catalyzes oxygen-dependent 5-hydroxyuridine (ho5U) modification at position 34 in tRNAs. This is tRNA uridine(34) hydroxylase from Paraburkholderia xenovorans (strain LB400).